We begin with the raw amino-acid sequence, 363 residues long: Phosrestin-2 (363 aa).

This sequence belongs to the arrestin family.

This chain is Phosrestin-2 (ARR1), found in Calliphora vicina (Blue blowfly).